The following is a 677-amino-acid chain: DNA gyrase subunit B, novobiocin-resistant (677 aa).

A disordered region spans residues 1–23 (MTTYDTRTATDTRGSEQPGHVGT). Residues 154–295 (IWTDGHRWTQ…RLLSAEIALQ (142 aa)) form a novobiocin-binding region. The Toprim domain maps to 456 to 570 (SEIFIVEGDS…EGHVHLSRPP (115 aa)). Positions 462, 535, and 537 each coordinate Mg(2+).

This sequence belongs to the type II topoisomerase GyrB family. Heterotetramer, composed of two GyrA and two GyrB chains. In the heterotetramer, GyrA contains the active site tyrosine that forms a transient covalent intermediate with DNA, while GyrB binds cofactors and catalyzes ATP hydrolysis. Mg(2+) is required as a cofactor. The cofactor is Mn(2+). It depends on Ca(2+) as a cofactor.

The protein localises to the cytoplasm. The enzyme catalyses ATP-dependent breakage, passage and rejoining of double-stranded DNA.. Its function is as follows. A type II topoisomerase that negatively supercoils closed circular double-stranded (ds) DNA in an ATP-dependent manner to modulate DNA topology and maintain chromosomes in an underwound state. Negative supercoiling favors strand separation, and DNA replication, transcription, recombination and repair, all of which involve strand separation. Also able to catalyze the interconversion of other topological isomers of dsDNA rings, including catenanes and knotted rings. Type II topoisomerases break and join 2 DNA strands simultaneously in an ATP-dependent manner. This is DNA gyrase subunit B, novobiocin-resistant from Streptomyces niveus (Streptomyces spheroides).